Consider the following 368-residue polypeptide: UDP-N-acetylglucosamine--N-acetylmuramyl-(pentapeptide) pyrophosphoryl-undecaprenol N-acetylglucosamine transferase (368 aa).

UDP-N-acetyl-alpha-D-glucosamine-binding positions include 10 to 12 (TGG), Asn126, Ser200, Ile255, and Gln300.

The protein belongs to the glycosyltransferase 28 family. MurG subfamily.

The protein resides in the cell membrane. The enzyme catalyses Mur2Ac(oyl-L-Ala-gamma-D-Glu-L-Lys-D-Ala-D-Ala)-di-trans,octa-cis-undecaprenyl diphosphate + UDP-N-acetyl-alpha-D-glucosamine = beta-D-GlcNAc-(1-&gt;4)-Mur2Ac(oyl-L-Ala-gamma-D-Glu-L-Lys-D-Ala-D-Ala)-di-trans,octa-cis-undecaprenyl diphosphate + UDP + H(+). It participates in cell wall biogenesis; peptidoglycan biosynthesis. In terms of biological role, cell wall formation. Catalyzes the transfer of a GlcNAc subunit on undecaprenyl-pyrophosphoryl-MurNAc-pentapeptide (lipid intermediate I) to form undecaprenyl-pyrophosphoryl-MurNAc-(pentapeptide)GlcNAc (lipid intermediate II). The polypeptide is UDP-N-acetylglucosamine--N-acetylmuramyl-(pentapeptide) pyrophosphoryl-undecaprenol N-acetylglucosamine transferase (Lactobacillus acidophilus (strain ATCC 700396 / NCK56 / N2 / NCFM)).